Here is a 718-residue protein sequence, read N- to C-terminus: Exostosin-2 (718 aa).

The Cytoplasmic segment spans residues 1–25 (MCASVKYNIRGPALIPRMKTKHRIY). A helical; Signal-anchor for type II membrane protein membrane pass occupies residues 26–46 (YITLFSIVLLGLIATGMFQFW). Residues 47-718 (PHSIESSNDW…LKSFPNIGSL (672 aa)) are Lumenal-facing. 4 disulfides stabilise this stretch: Cys-85–Cys-90, Cys-96–Cys-151, Cys-286–Cys-300, and Cys-318–Cys-339. The N-linked (GlcNAc...) asparagine glycan is linked to Asn-288. UDP contacts are provided by Leu-461, Arg-465, Asn-490, and Asn-517. 7 residues coordinate UDP-N-acetyl-alpha-D-glucosamine: Arg-465, Asn-490, Asn-517, Arg-522, Asp-538, Asp-539, and Asp-540. UDP contacts are provided by Asp-538 and Asp-539. Mn(2+) is bound at residue Asp-540. Residues Tyr-582 and Ser-584 each coordinate a protein. Cys-626 and Cys-676 are oxidised to a cystine. UDP-N-acetyl-alpha-D-glucosamine is bound by residues Glu-627 and Asp-628. Asn-637 carries N-linked (GlcNAc...) asparagine glycosylation. Residues Lys-651 and Lys-653 each coordinate a protein. Arg-673 lines the UDP-N-acetyl-alpha-D-glucosamine pocket.

It belongs to the glycosyltransferase 47 family. In terms of assembly, part of the heparan sulfate polymerase, a dimeric complex composed of EXT1 and EXT2. Could also form homooligomeric complexes. Interacts with NDST1. Interacts with GALNT5. Mn(2+) is required as a cofactor. In terms of processing, N-glycosylated at Asn-637. A soluble form is generated by proteolytic processing. Widely expressed.

Its subcellular location is the golgi apparatus membrane. The protein resides in the golgi apparatus. The protein localises to the cis-Golgi network membrane. It localises to the endoplasmic reticulum membrane. It is found in the secreted. The enzyme catalyses 3-O-{[(1-&gt;4)-beta-D-GlcA-(1-&gt;4)-alpha-D-GlcNAc](n)-(1-&gt;4)-beta-D-GlcA-(1-&gt;3)-beta-D-Gal-(1-&gt;3)-beta-D-Gal-(1-&gt;4)-beta-D-Xyl}-L-seryl-[protein] + UDP-N-acetyl-alpha-D-glucosamine = 3-O-{alpha-D-GlcNAc-[(1-&gt;4)-beta-D-GlcA-(1-&gt;4)-alpha-D-GlcNAc](n)-(1-&gt;4)-beta-D-GlcA-(1-&gt;3)-beta-D-Gal-(1-&gt;3)-beta-D-Gal-(1-&gt;4)-beta-D-Xyl}-L-seryl-[protein] + UDP + H(+). It participates in protein modification; protein glycosylation. Functionally, glycosyltransferase forming with EXT1 the heterodimeric heparan sulfate polymerase which catalyzes the elongation of the heparan sulfate glycan backbone. Glycan backbone extension consists in the alternating transfer of (1-&gt;4)-beta-D-GlcA and (1-&gt;4)-alpha-D-GlcNAc residues from their respective UDP-sugar donors. Both EXT1 and EXT2 are required for the full activity of the polymerase since EXT1 bears the N-acetylglucosaminyl-proteoglycan 4-beta-glucuronosyltransferase activity within the complex while EXT2 carries the glucuronosyl-N-acetylglucosaminyl-proteoglycan 4-alpha-N-acetylglucosaminyltransferase activity. Heparan sulfate proteoglycans are ubiquitous components of the extracellular matrix and play an important role in tissue homeostasis and signaling. The sequence is that of Exostosin-2 from Homo sapiens (Human).